Here is a 307-residue protein sequence, read N- to C-terminus: 2-carboxy-1,4-naphthoquinone phytyltransferase (307 aa).

The next 8 membrane-spanning stretches (helical) occupy residues 27–47 (MYTV…GLTG), 51–71 (GDVF…INLS), 98–118 (LVFL…MSMS), 125–145 (TVLE…GPPF), 147–167 (LGYL…LAIA), 177–197 (FSWN…IILF), 223–243 (LGSQ…AIGV), and 284–304 (FIAV…YGWA).

Belongs to the MenA family. Type 2 subfamily.

Its subcellular location is the cell inner membrane. It catalyses the reaction 2-carboxy-1,4-naphthoquinone + phytyl diphosphate + H(+) = demethylphylloquinone + CO2 + diphosphate. It functions in the pathway cofactor biosynthesis; phylloquinone biosynthesis. Its function is as follows. Involved in the synthesis of phylloquinone (vitamin K1). Catalyzes the transfer of a prenyl chain to 2-carboxy-1,4-naphthoquinone. The polypeptide is 2-carboxy-1,4-naphthoquinone phytyltransferase (Synechocystis sp. (strain ATCC 27184 / PCC 6803 / Kazusa)).